Reading from the N-terminus, the 426-residue chain is Tyrosine--tRNA ligase (426 aa).

An L-tyrosine-binding site is contributed by Y35. A 'HIGH' region motif is present at residues 40-49 (PTAPSLHIGH). Y174 and Q178 together coordinate L-tyrosine. The 'KMSKS' region motif lies at 234 to 238 (KFGKT). Position 237 (K237) interacts with ATP. Residues 358–418 (PRVVDALVAT…WAVIRRGRRA (61 aa)) enclose the S4 RNA-binding domain.

Belongs to the class-I aminoacyl-tRNA synthetase family. TyrS type 1 subfamily. In terms of assembly, homodimer.

Its subcellular location is the cytoplasm. The enzyme catalyses tRNA(Tyr) + L-tyrosine + ATP = L-tyrosyl-tRNA(Tyr) + AMP + diphosphate + H(+). Its function is as follows. Catalyzes the attachment of tyrosine to tRNA(Tyr) in a two-step reaction: tyrosine is first activated by ATP to form Tyr-AMP and then transferred to the acceptor end of tRNA(Tyr). The chain is Tyrosine--tRNA ligase from Acidothermus cellulolyticus (strain ATCC 43068 / DSM 8971 / 11B).